A 463-amino-acid chain; its full sequence is MRAGAGAAGESCKDDGVRPDDVSRLTADAVVRRVALLAVHTSPLAQPGTGDAGGMNVYVLQSALHLAKRGIEVEIFTRATASADPPVVRVAPGVLVRNVVAGPFEGLDKYDLPTQLCAFAAGVLRAEAAHEPGHYDIVHSHYWLSGQVGWLARDRWAVPLVHTAHTLAAVKNAALANGDAPEPPLRTVGEQQVVDEADRLIVNTDDEAKQLISIHHADPARIDVVHPGVDLEVFRPGDRQQARTALGLRPEEKVVAFVGRIQPLKAPDIVLRAVAKLPGVRIIVAGGPSGSGLASPDGLAQLADELGIAERVTFLPPQSRTDLARVFHAVDLVAIPSYSESFGLVAVEAQACGTRVVAAAVGGLPVAVRDGVSGTLVSGHDVDQWAAAIDGLLRSNAGAQGALMSRAAAEHAATFSWENTTDALLASYRRAIGDFTAGRRRKVRDPVAARKPRRWTARRGVGA.

His-40 is a binding site for 1D-myo-inositol 3-phosphate. UDP-N-acetyl-alpha-D-glucosamine-binding positions include 46 to 47 (QP) and Gly-54. 1D-myo-inositol 3-phosphate contacts are provided by residues 51–56 (DAGGMN), Lys-109, Tyr-142, Thr-166, and Arg-186. Residues Arg-260, Lys-265, and Gln-318 each contribute to the UDP-N-acetyl-alpha-D-glucosamine site. Mg(2+) contacts are provided by Phe-327, His-328, and Val-330. Glu-340 and Glu-348 together coordinate UDP-N-acetyl-alpha-D-glucosamine. A Mg(2+)-binding site is contributed by Thr-354. Residues 443-463 (VRDPVAARKPRRWTARRGVGA) are disordered.

The protein belongs to the glycosyltransferase group 1 family. MshA subfamily. As to quaternary structure, homodimer.

The enzyme catalyses 1D-myo-inositol 3-phosphate + UDP-N-acetyl-alpha-D-glucosamine = 1D-myo-inositol 2-acetamido-2-deoxy-alpha-D-glucopyranoside 3-phosphate + UDP + H(+). Functionally, catalyzes the transfer of a N-acetyl-glucosamine moiety to 1D-myo-inositol 3-phosphate to produce 1D-myo-inositol 2-acetamido-2-deoxy-glucopyranoside 3-phosphate in the mycothiol biosynthesis pathway. This chain is D-inositol 3-phosphate glycosyltransferase, found in Mycobacterium ulcerans (strain Agy99).